We begin with the raw amino-acid sequence, 372 residues long: Pepsin A (372 aa).

Positions 1-42 are cleaved as a propeptide — activation peptide; that stretch reads MSVVKIPLVKKKSLRQNLIENGKLKEFMRTHKYNLGSKYIRE. In terms of domain architecture, Peptidase A1 spans 60-369; that stretch reads YFGTIGIGTP…DRGNNQIGLA (310 aa). Asp78 is a catalytic residue. An intrachain disulfide couples Cys91 to Cys96. Residue Ser114 is modified to Phosphoserine. An intrachain disulfide couples Cys252 to Cys256. Asp261 is an active-site residue. Cys295 and Cys328 are joined by a disulfide.

It belongs to the peptidase A1 family.

It is found in the secreted. It carries out the reaction Preferential cleavage: hydrophobic, preferably aromatic, residues in P1 and P1' positions. Cleaves 1-Phe-|-Val-2, 4-Gln-|-His-5, 13-Glu-|-Ala-14, 14-Ala-|-Leu-15, 15-Leu-|-Tyr-16, 16-Tyr-|-Leu-17, 23-Gly-|-Phe-24, 24-Phe-|-Phe-25 and 25-Phe-|-Tyr-26 bonds in the B chain of insulin.. Its function is as follows. Shows particularly broad specificity; although bonds involving phenylalanine and leucine are preferred, many others are also cleaved to some extent. The polypeptide is Pepsin A (PGA) (Bos taurus (Bovine)).